Consider the following 33-residue polypeptide: Non-specific lipid-transfer protein (33 aa).

C14 and C29 are joined by a disulfide.

The protein belongs to the plant LTP family. As to quaternary structure, dimer.

Its function is as follows. Plant non-specific lipid-transfer proteins transfer phospholipids as well as galactolipids across membranes. May play a role in wax or cutin deposition in the cell walls of expanding epidermal cells and certain secretory tissues. Has antibacterial activity against Gram-positive bacteria S.aureus and S.epidermidis and blocks biofilm formation. In a mouse model, also protects against bacterial sepsis and has an anti-inflammatory effect. Exhibits antinociceptive activity upon oral or intraperitoneal application in mice. The chain is Non-specific lipid-transfer protein from Morinda citrifolia (Indian mulberry).